We begin with the raw amino-acid sequence, 498 residues long: Trichoplein keratin filament-binding protein (498 aa).

Residues 11-39 (CSQQRLNQQLARQREQEARLRQQWEQNSR) adopt a coiled-coil conformation. Residues K50 and K57 each participate in a glycyl lysine isopeptide (Lys-Gly) (interchain with G-Cter in ubiquitin) cross-link. Coiled coils occupy residues 66 to 136 (AYQR…LIAE), 163 to 353 (VNSW…LREE), and 380 to 479 (LTGR…EAET). Positions 73 to 498 (KEEKRRSLEA…PYGHPKIAWN (426 aa)) are interaction with keratin proteins. The segment at 167–189 (EMQKEEKKQQEATAEQENKRYEN) is disordered. Positions 168 to 189 (MQKEEKKQQEATAEQENKRYEN) are enriched in basic and acidic residues. The trichohyalin/plectin homology domain stretch occupies residues 259–425 (KQMEAFRQKA…RELARREKEE (167 aa)). Residues 447–498 (QAWEADQQEEEEEEEARRVEQLSDALLQQEAETMAEQGYRPKPYGHPKIAWN) form a disordered region.

This sequence belongs to the TCHP family. Interacts specifically with keratin proteins including, KRT5, KRT6A, KRT8, KRT14, KRT16 and KRT18. Interacts with KCTD17. Post-translationally, ubiquitinated. Ubiquitination by the BCR(KCTD17) E3 ubiquitin ligase complex results in proteasomal degradation, and induces ciliogenesis. In terms of tissue distribution, expressed at high levels in normal urothelial and breast epithelial cells. Also expressed in the smooth muscle and endothelial cells. Reduced expression seen in advanced bladder and breast carcinomas (at protein level). Ubiquitous. Expressed at highest levels in the heart, skeletal muscle, kidney, liver and testis.

It is found in the cytoplasm. It localises to the cytoskeleton. The protein localises to the cell membrane. Its subcellular location is the mitochondrion. The protein resides in the cell junction. It is found in the desmosome. It localises to the microtubule organizing center. The protein localises to the centrosome. In terms of biological role, tumor suppressor which has the ability to inhibit cell growth and be pro-apoptotic during cell stress. Inhibits cell growth in bladder and prostate cancer cells by a down-regulation of HSPB1 by inhibiting its phosphorylation. May act as a 'capping' or 'branching' protein for keratin filaments in the cell periphery. May regulate K8/K18 filament and desmosome organization mainly at the apical or peripheral regions of simple epithelial cells. Is a negative regulator of ciliogenesis. The sequence is that of Trichoplein keratin filament-binding protein from Homo sapiens (Human).